We begin with the raw amino-acid sequence, 57 residues long: Peptide BmKa1 (57 aa).

The signal sequence occupies residues 1–22 (MKPRVFFLLFLLVAAMIETGES). Composition is skewed to acidic residues over residues 20 to 29 (GESEENEEGS) and 45 to 57 (VDNEDSDIDGDSD). Residues 20-57 (GESEENEEGSNESGKSTEAKNTDASVDNEDSDIDGDSD) are disordered.

It belongs to the non-disulfide-bridged peptide (NDBP) superfamily. As to expression, expressed by the venom gland.

It is found in the secreted. This Olivierus martensii (Manchurian scorpion) protein is Peptide BmKa1.